The sequence spans 295 residues: Probable deoxyhypusine synthase (295 aa).

Catalysis depends on lysine 267, which acts as the Nucleophile.

It belongs to the deoxyhypusine synthase family. It depends on NAD(+) as a cofactor.

The enzyme catalyses [eIF5A protein]-L-lysine + spermidine = [eIF5A protein]-deoxyhypusine + propane-1,3-diamine. Its pathway is protein modification; eIF5A hypusination. Its function is as follows. Catalyzes the NAD-dependent oxidative cleavage of spermidine and the subsequent transfer of the butylamine moiety of spermidine to the epsilon-amino group of a specific lysine residue of the eIF-5A precursor protein to form the intermediate deoxyhypusine residue. The polypeptide is Probable deoxyhypusine synthase (Pyrobaculum calidifontis (strain DSM 21063 / JCM 11548 / VA1)).